The following is a 396-amino-acid chain: Elongation factor Tu 2 (396 aa).

In terms of domain architecture, tr-type G spans 10–206 (KPHVNVGTIG…ALDTYIPTPK (197 aa)). The G1 stretch occupies residues 19 to 26 (GHVDHGKT). 19-26 (GHVDHGKT) is a GTP binding site. Thr26 is a Mg(2+) binding site. The segment at 60-64 (GITIS) is G2. The interval 81–84 (DCPG) is G3. Residues 81-85 (DCPGH) and 136-139 (NKAD) each bind GTP. Residues 136 to 139 (NKAD) form a G4 region. Residues 174-176 (SAL) form a G5 region.

This sequence belongs to the TRAFAC class translation factor GTPase superfamily. Classic translation factor GTPase family. EF-Tu/EF-1A subfamily. As to quaternary structure, monomer.

It localises to the cytoplasm. The catalysed reaction is GTP + H2O = GDP + phosphate + H(+). In terms of biological role, GTP hydrolase that promotes the GTP-dependent binding of aminoacyl-tRNA to the A-site of ribosomes during protein biosynthesis. The sequence is that of Elongation factor Tu 2 from Ruthia magnifica subsp. Calyptogena magnifica.